The chain runs to 357 residues: tRNA pseudouridine synthase B (357 aa).

Residue Asp42 is the Nucleophile of the active site.

This sequence belongs to the pseudouridine synthase TruB family. Type 1 subfamily.

The enzyme catalyses uridine(55) in tRNA = pseudouridine(55) in tRNA. In terms of biological role, responsible for synthesis of pseudouridine from uracil-55 in the psi GC loop of transfer RNAs. The chain is tRNA pseudouridine synthase B from Treponema denticola (strain ATCC 35405 / DSM 14222 / CIP 103919 / JCM 8153 / KCTC 15104).